The primary structure comprises 179 residues: Large ribosomal subunit protein uL6 (179 aa).

It belongs to the universal ribosomal protein uL6 family. As to quaternary structure, part of the 50S ribosomal subunit.

Its function is as follows. This protein binds to the 23S rRNA, and is important in its secondary structure. It is located near the subunit interface in the base of the L7/L12 stalk, and near the tRNA binding site of the peptidyltransferase center. The sequence is that of Large ribosomal subunit protein uL6 from Mycolicibacterium vanbaalenii (strain DSM 7251 / JCM 13017 / BCRC 16820 / KCTC 9966 / NRRL B-24157 / PYR-1) (Mycobacterium vanbaalenii).